The sequence spans 340 residues: MQQHALYHPVSIGPLSLKGNVFFAPVAGYSDSAFRSIAIEWEASFTYTEMVSSEAMVRDSLNTKRLIRRASNETHYAIQIFGSNPAVMAETAKLIVDSAQPSCIDINAGCPMPKITKTGAGAALTREPTRLYEVVKAVADAVYAQDARIPVTVKIRAGWEEAHLTWKEAARAAVDAGAQALALHPRTCAQCYAGEANWDIIADLVQCARGWGEVPVFGSGDLHAPEDARAMLEHTACAGVMFARGAMGNPFIFRQTRQLLTEGYYTPVTFEQKLRAAWRELHLLAQDVGESSACKQMRKRFVSYAKGERGKTQWCQRAVHASSFADFAAVIRDACPCIGL.

Residues 25 to 27 (PVA) and Q79 each bind FMN. C110 functions as the Proton donor in the catalytic mechanism. Residues K154, 219-221 (SGD), and 243-244 (AR) each bind FMN.

Belongs to the Dus family. Requires FMN as cofactor.

It catalyses the reaction a 5,6-dihydrouridine in tRNA + NAD(+) = a uridine in tRNA + NADH + H(+). The catalysed reaction is a 5,6-dihydrouridine in tRNA + NADP(+) = a uridine in tRNA + NADPH + H(+). Catalyzes the synthesis of 5,6-dihydrouridine (D), a modified base found in the D-loop of most tRNAs, via the reduction of the C5-C6 double bond in target uridines. This Treponema pallidum (strain Nichols) protein is Probable tRNA-dihydrouridine synthase (dus).